The sequence spans 549 residues: MTIKSMRRAYQVVKTVLQYGLDDLIPAKLKPWYFRLLRWSFFWLTNQHKDKVGGERLKLAMQELGPVYIKFGQMLSTRRDLLSDEWAEELAMLQDRVPPFDSAIARAQIEAELGAPIETYFDNFDDTPLASASISQVHTATLKSNGEEVVLKVLRPNVEEKVHADLLLMTQSAQVLETLLGHGNRLRPAEVVEDYRTTIEGELNLKLEALNAIKLRNNFIDSGALYIPKMYEEFCFTRLIVMERIYGVPVSDRAALEAQGTNLKLLAERGVELFFTQVFRDNFFHADMHPGNIFVSTEHPEDPFYIGLDCGIMGTLTEQDKRYLAENFLAFFNRDYTRIAQLYIESGWVAADTDLVAFEQAIKVVCEPMFNKPLDEISFGHVLLELFRTARRFDMVVQPQLVLLEKTLLYIEGLGRQLYPQLDLWQTAKPFLESWMAEQMGPLGMAKKIKKQFPYWTDKLPELPELVYDNLKMGKNFVNSQNQLLDRYLKQQQKAHKSNYLLITSAVLVICGSILFSQNATLWASYACIGIGATLWLLGWRSRPKNRKF.

The Protein kinase domain maps to 123–501; it reads NFDDTPLASA…QQKAHKSNYL (379 aa). ATP contacts are provided by residues 129-137 and K152; that span reads LASASISQV. The active-site Proton acceptor is D287. The next 2 membrane-spanning stretches (helical) occupy residues 498–518 and 520–540; these read SNYLLITSAVLVICGSILFSQ and ATLWASYACIGIGATLWLLGW.

The protein belongs to the ABC1 family. UbiB subfamily.

It is found in the cell inner membrane. The protein operates within cofactor biosynthesis; ubiquinone biosynthesis [regulation]. Is probably a protein kinase regulator of UbiI activity which is involved in aerobic coenzyme Q (ubiquinone) biosynthesis. The protein is Probable protein kinase UbiB of Shewanella loihica (strain ATCC BAA-1088 / PV-4).